The sequence spans 371 residues: Cytochrome b (371 aa).

Helical transmembrane passes span 25–45 (FGSMLLTCSALQVMTGFFLAI), 69–90 (WIMQNLHAIGASMFFICIYIHI), 105–125 (WLSGTTLLIILMATAFFGYVL), and 170–190 (FFALHFILPFAIISMSSIHIM). Heme b-binding residues include histidine 75 and histidine 89. Heme b is bound by residues histidine 174 and histidine 188. Histidine 193 contacts a ubiquinone. Transmembrane regions (helical) follow at residues 218–238 (HKDILMLTIMITTMFTIMSFS), 280–300 (LGGTVALVLSVAILMTMPFTH), 312–332 (IMQLVFWTLIATFITITWAAT), and 339–358 (FTIIGQTTSFLYFSFFIMNP).

This sequence belongs to the cytochrome b family. In terms of assembly, the cytochrome bc1 complex contains 3 respiratory subunits (MT-CYB, CYC1 and UQCRFS1), 2 core proteins (UQCRC1 and UQCRC2) and probably 6 low-molecular weight proteins. Heme b serves as cofactor.

The protein localises to the mitochondrion inner membrane. Functionally, component of the ubiquinol-cytochrome c reductase complex (complex III or cytochrome b-c1 complex) that is part of the mitochondrial respiratory chain. The b-c1 complex mediates electron transfer from ubiquinol to cytochrome c. Contributes to the generation of a proton gradient across the mitochondrial membrane that is then used for ATP synthesis. The polypeptide is Cytochrome b (MT-CYB) (Coluber constrictor (Eastern racer)).